Reading from the N-terminus, the 63-residue chain is uncharacterized protein (63 aa).

The first 21 residues, 1–21, serve as a signal peptide directing secretion; that stretch reads MYLSLLLILLAWTLWLGNSLA.

This is an uncharacterized protein from Haemophilus influenzae (strain ATCC 51907 / DSM 11121 / KW20 / Rd).